Here is a 1254-residue protein sequence, read N- to C-terminus: MGVGDPLPLPPEKNRREVNKPPDIASTSSSSASAVNNARLSDAPILLFVYFHKAFRAQLAELQFLAGDTVRSGSDLAVELRSKFEFLKLVYKYHSAAEDEVIFSALDTRVKNIVFNYSLEHDATDDLFTSVFHWLNVLEEEQGNRADVLREVVLCIGTIQSSICQHMLKEERQVFPLMIENFSFEEQASLVWQFICSVPVMVLEEIFPWMTSLLSPKEKSEVETCFKEVVPNELSLQLVINSWLIDDSQSSLTALTKIMKGVQSVEVSENMTNSQTNSSSSGVFQRFWQWSKKMSFSSPNTGHILVHGIHLWHNAIRKDLVDIQKGLCQLTFPSLSLDLNVLVVRLNFLADVLIFYSNAFKTFFYPVFEDMVDQQHSSSSKQFTIDGHVENFKKSLDLETRAGSDNFVITLQEKLESLILTVAKQFSIEETEVFPIISKNCNIEMQRQLLYRSIHFLPLGLLKCVIMWFSAQLPEDECQSIIHYLSSEDSFPNKPFAHLLLQWFRFGYSGKTPVESFWNELSFMFKPRCSFEEELTEEASGSFFQQSPQKLFKVSDPYSMDPPAGYMNETPYSSAMNQQILIPGKLRPLLHLPDLFGDKTIGEHLTMDLKPIDLIFYFHKAMKKDLDYLVRGSARLATDYSFLGEFQQRFHLIKFLYQIHSDAEDEIAFPALEAKGKLQNISQSYSIDHELEVEHLNKVSFLLNELAELNMLVLDHKNVKYEKLCMSLQDICKSIHKLLSEHLHREETELWCLFRDCFTIEEQEKIIACMLGRISGEILQDMIPWLMESLIPDEQHAVMSLWRQATRKTMFGEWLTEWYNSHAVEEETEEANKDPSENSDPLDVVWSYLFEGAADEYKGSICSKPLEETELKGIMNKPLGKAAPNNKVEFGNKEENHLEISGSKKVCTGADETKYKEQTDSNAQAFQMSHNTSQSGQDSRYECLLSMSQEDVEATIRRISRDSSLDPQKKSYIIQNLLMSRWIATQRIYNLEPSILSSNREAVPGQNPSYRDPHKLIFGCKHYKRSCKLLAPCCNKLYTCIRCHDEEVDHLLDRKQITKMMCMKCMIIQPVGASCSNISCSSSMGKYYCKICKLFDDDREIYHCPYCNLCRLGKGLSIDYFHCMKCNACMSRLIVEHVCREKCLEDNCPICHEYIFTSNSPVKALPCGHVMHSTCFQEYTCSHYTCPICSKSLGDMQVYFRMLDALLAEQKMPDEYLNQTQVILCNDCGRKGNAPYHWLYHKCSSCASYNTRLF.

Positions 1 to 30 are disordered; that stretch reads MGVGDPLPLPPEKNRREVNKPPDIASTSSS. The chain crosses the membrane as a helical span at residues 454 to 474; that stretch reads IHFLPLGLLKCVIMWFSAQLP. The CHY-type zinc finger occupies 1013–1082; the sequence is PHKLIFGCKH…ASCSNISCSS (70 aa). Residues C1020, H1022, C1033, C1034, C1040, C1043, H1044, H1050, C1062, C1065, C1075, C1080, C1089, C1092, H1103, C1104, C1107, C1110, H1122, C1123, C1126, C1129, H1137, and C1139 each coordinate Zn(2+). The segment at 1084–1147 adopts a CTCHY-type zinc-finger fold; sequence MGKYYCKICK…VCREKCLEDN (64 aa). Residues 1148 to 1190 form an RING-type; atypical zinc finger; the sequence is CPICHEYIFTSNSPVKALPCGHVMHSTCFQEYTCSHYTCPICS.

In terms of assembly, binds zinc and iron ions.

The protein localises to the membrane. It is found in the nucleus. Its pathway is protein modification; protein ubiquitination. Probable E3 ubiquitin-protein ligase that may regulate the response to iron deficiency and thus contributes to iron homeostasis. The protein is Zinc finger protein BRUTUS-like At1g18910 of Arabidopsis thaliana (Mouse-ear cress).